The sequence spans 174 residues: Bacterial proteasome activator (174 aa).

2 disordered regions span residues 1-37 (MNND…PSLT) and 153-174 (SALP…GQYL). Positions 160-174 (GKPGQAGGQGTGQYL) are enriched in gly residues. Residues 172 to 174 (QYL) carry the HbYX motif motif.

Belongs to the Bpa family. As to quaternary structure, forms a homooligomeric, either hexameric or heptameric, ring-like structure which stacks co-axially with the proteasomal alpha-rings.

Interacts with the core proteasome alpha-subunit (PrcA) through its C-terminal hydrophobic-tyrosine-X motif (HbYX motif). Interaction of Bpa with the proteasome stimulates proteasomal peptidase and casein degradation activity, which suggests Bpa could play a role in the removal of non-native or damaged proteins by influencing the conformation of the proteasome complex upon interaction. The polypeptide is Bacterial proteasome activator (bpa) (Mycobacterium leprae (strain TN)).